A 233-amino-acid chain; its full sequence is uncharacterized protein (233 aa).

Belongs to the asfivirus H233R family.

This is an uncharacterized protein from African swine fever virus (isolate Warthog/Namibia/Wart80/1980) (ASFV).